The primary structure comprises 383 residues: ATP phosphoribosyltransferase regulatory subunit (383 aa).

This sequence belongs to the class-II aminoacyl-tRNA synthetase family. HisZ subfamily. In terms of assembly, heteromultimer composed of HisG and HisZ subunits.

The protein localises to the cytoplasm. Its pathway is amino-acid biosynthesis; L-histidine biosynthesis; L-histidine from 5-phospho-alpha-D-ribose 1-diphosphate: step 1/9. Its function is as follows. Required for the first step of histidine biosynthesis. May allow the feedback regulation of ATP phosphoribosyltransferase activity by histidine. In Neisseria meningitidis serogroup C (strain 053442), this protein is ATP phosphoribosyltransferase regulatory subunit.